The following is a 201-amino-acid chain: Large ribosomal subunit protein bL25 (201 aa).

Belongs to the bacterial ribosomal protein bL25 family. CTC subfamily. As to quaternary structure, part of the 50S ribosomal subunit; part of the 5S rRNA/L5/L18/L25 subcomplex. Contacts the 5S rRNA. Binds to the 5S rRNA independently of L5 and L18.

Functionally, this is one of the proteins that binds to the 5S RNA in the ribosome where it forms part of the central protuberance. The sequence is that of Large ribosomal subunit protein bL25 from Aromatoleum aromaticum (strain DSM 19018 / LMG 30748 / EbN1) (Azoarcus sp. (strain EbN1)).